Consider the following 205-residue polypeptide: Meiotic nuclear division protein 1 homolog (205 aa).

The stretch at 79–147 forms a coiled coil; that stretch reads LHARKRKLET…CADLEKYKEC (69 aa).

Belongs to the MND1 family.

The protein localises to the nucleus. In terms of biological role, required for proper homologous chromosome pairing and efficient cross-over and intragenic recombination during meiosis. Stimulates both dmc1- and rad51-mediated homologous strand assimilation, which is required for the resolution of meiotic double-strand breaks. This is Meiotic nuclear division protein 1 homolog from Xenopus laevis (African clawed frog).